The chain runs to 237 residues: GrpE protein homolog, mitochondrial (237 aa).

The protein belongs to the GrpE family. Probable component of the PAM complex at least composed of a mitochondrial HSP70 protein, GrpE, tim-44, tim-16 and tim-14/dnj-21.

It localises to the mitochondrion matrix. Its function is as follows. Essential component of the PAM complex, a complex required for the translocation of transit peptide-containing proteins from the inner membrane into the mitochondrial matrix in an ATP-dependent manner. Seems to control the nucleotide-dependent binding of mitochondrial HSP70 to substrate proteins. The sequence is that of GrpE protein homolog, mitochondrial from Caenorhabditis elegans.